A 497-amino-acid chain; its full sequence is Putative aldehyde dehydrogenase AldA (497 aa).

Residue 213 to 219 (GKGSESG) participates in NAD(+) binding. Residues glutamate 257 and cysteine 291 contribute to the active site.

It belongs to the aldehyde dehydrogenase family.

The catalysed reaction is an aldehyde + NAD(+) + H2O = a carboxylate + NADH + 2 H(+). The chain is Putative aldehyde dehydrogenase AldA (aldA) from Staphylococcus epidermidis (strain ATCC 35984 / DSM 28319 / BCRC 17069 / CCUG 31568 / BM 3577 / RP62A).